Consider the following 206-residue polypeptide: Cytochrome c (206 aa).

Transmembrane regions (helical) follow at residues Ile10–Leu30, Phe49–Met69, and Lys76–Leu96. Cys152, Cys155, His156, and Met182 together coordinate heme.

As to quaternary structure, monomer. Component of the photosynthetic reaction center composed of protein subunits PscA, PscC, PscB and PscD. The reaction center interacts with FmoA (which forms the Fenna-Matthews-Olson (FMO) complex). The reaction center/FmoA complex has two PscA subunits, one PscB and one PscD subunit, probably two FmoA complexes and at least one PscC subunit. Post-translationally, binds 1 heme group per subunit.

Its subcellular location is the cell inner membrane. Monoheme cytochrome which is the immediate electron donor to P840 of the photosynthetic reaction center complex. This is Cytochrome c (pscC) from Chlorobaculum tepidum (strain ATCC 49652 / DSM 12025 / NBRC 103806 / TLS) (Chlorobium tepidum).